Consider the following 960-residue polypeptide: Leucine--tRNA ligase (960 aa).

A 'HIGH' region motif is present at residues 71 to 82 (PYPSGAGLHVGH). The short motif at 729–733 (KMGKS) is the 'KMSKS' region element. Residue lysine 732 coordinates ATP.

It belongs to the class-I aminoacyl-tRNA synthetase family.

Its subcellular location is the cytoplasm. It carries out the reaction tRNA(Leu) + L-leucine + ATP = L-leucyl-tRNA(Leu) + AMP + diphosphate. In Corynebacterium diphtheriae (strain ATCC 700971 / NCTC 13129 / Biotype gravis), this protein is Leucine--tRNA ligase.